The sequence spans 729 residues: Fatty acid oxidation complex subunit alpha (729 aa).

The interval 1-189 (MLYKGDTLYL…KIGLVDGVVK (189 aa)) is enoyl-CoA hydratase/isomerase. Asp-296 serves as a coordination point for substrate. Positions 311-729 (ETPKQAAVLG…ARPVGDLKTA (419 aa)) are 3-hydroxyacyl-CoA dehydrogenase. NAD(+) is bound by residues Met-324, Asp-343, 400 to 402 (VVE), Lys-407, and Ser-429. Catalysis depends on His-450, which acts as the For 3-hydroxyacyl-CoA dehydrogenase activity. Asn-453 contributes to the NAD(+) binding site. The substrate site is built by Asn-500 and Tyr-660. Residues 708–729 (RHNEPYYPPVEPARPVGDLKTA) form a disordered region.

This sequence in the N-terminal section; belongs to the enoyl-CoA hydratase/isomerase family. The protein in the C-terminal section; belongs to the 3-hydroxyacyl-CoA dehydrogenase family. As to quaternary structure, heterotetramer of two alpha chains (FadB) and two beta chains (FadA).

The catalysed reaction is a (3S)-3-hydroxyacyl-CoA + NAD(+) = a 3-oxoacyl-CoA + NADH + H(+). It carries out the reaction a (3S)-3-hydroxyacyl-CoA = a (2E)-enoyl-CoA + H2O. The enzyme catalyses a 4-saturated-(3S)-3-hydroxyacyl-CoA = a (3E)-enoyl-CoA + H2O. It catalyses the reaction (3S)-3-hydroxybutanoyl-CoA = (3R)-3-hydroxybutanoyl-CoA. The catalysed reaction is a (3Z)-enoyl-CoA = a 4-saturated (2E)-enoyl-CoA. It carries out the reaction a (3E)-enoyl-CoA = a 4-saturated (2E)-enoyl-CoA. The protein operates within lipid metabolism; fatty acid beta-oxidation. Involved in the aerobic and anaerobic degradation of long-chain fatty acids via beta-oxidation cycle. Catalyzes the formation of 3-oxoacyl-CoA from enoyl-CoA via L-3-hydroxyacyl-CoA. It can also use D-3-hydroxyacyl-CoA and cis-3-enoyl-CoA as substrate. The polypeptide is Fatty acid oxidation complex subunit alpha (Escherichia coli O17:K52:H18 (strain UMN026 / ExPEC)).